We begin with the raw amino-acid sequence, 244 residues long: Small ribosomal subunit protein eS4 (244 aa).

The region spanning 37–123 (VPLAILLKYY…AKYKFVRIMN (87 aa)) is the S4 RNA-binding domain.

Belongs to the eukaryotic ribosomal protein eS4 family.

The sequence is that of Small ribosomal subunit protein eS4 (rps4e) from Sulfolobus acidocaldarius (strain ATCC 33909 / DSM 639 / JCM 8929 / NBRC 15157 / NCIMB 11770).